The chain runs to 86 residues: Small ribosomal subunit protein bS18 (86 aa).

It belongs to the bacterial ribosomal protein bS18 family. In terms of assembly, part of the 30S ribosomal subunit. Forms a tight heterodimer with protein bS6.

In terms of biological role, binds as a heterodimer with protein bS6 to the central domain of the 16S rRNA, where it helps stabilize the platform of the 30S subunit. The sequence is that of Small ribosomal subunit protein bS18 from Campylobacter fetus subsp. fetus (strain 82-40).